The primary structure comprises 333 residues: Fe(3+)-citrate import system permease protein YfmE (333 aa).

8 consecutive transmembrane segments (helical) span residues 12 to 32 (LLAI…SIGI), 65 to 85 (IILA…LQGV), 95 to 115 (VVGI…IFPE), 120 to 140 (VLPF…LMIA), 194 to 214 (EVKL…ILIP), 238 to 258 (FILI…VGSI), 279 to 299 (YLLP…DTLG), and 306 to 326 (VEIP…LYLL).

Belongs to the binding-protein-dependent transport system permease family. FecCD subfamily. The complex is composed of one ATP-binding protein (YfmF), two transmembrane proteins (YfmD and YfmE) and a solute-binding protein (YfmC).

The protein localises to the cell membrane. In terms of biological role, part of the ABC transporter complex YfmCDEF involved in citrate-dependent Fe(3+) import. Involved in the translocation of the substrate across the membrane. The chain is Fe(3+)-citrate import system permease protein YfmE (yfmE) from Bacillus subtilis (strain 168).